The following is a 296-amino-acid chain: Protein RarD (296 aa).

Over 1–11 (MDAKQTRQGVL) the chain is Cytoplasmic. The helical transmembrane segment at 12–34 (LALAAYFIWGIAPAYFKLIYYVP) threads the bilayer. The region spanning 18 to 145 (FIWGIAPAYF…AICGVLVQLW (128 aa)) is the EamA domain. Topologically, residues 35-37 (ADE) are periplasmic. A helical transmembrane segment spans residues 38-60 (ILTHRVIWSFFFMVVLMSICRQW). Topologically, residues 61–72 (SYLKTLIQTPQK) are cytoplasmic. The chain crosses the membrane as a helical span at residues 73 to 95 (IFMLAVSAVLIGGNWLLFIWAVN). Topologically, residues 96–99 (NHHM) are periplasmic. A helical transmembrane segment spans residues 100-122 (LEASLGYFINPLVNIVLGMIFLG). Residues 123–128 (ERFRRM) lie on the Cytoplasmic side of the membrane. The helical transmembrane segment at 129–146 (QWLAVILAICGVLVQLWT) threads the bilayer. At 147 to 149 (FGS) the chain is on the periplasmic side. Residues 150–167 (LPIIALGLAFSFAFYGLV) traverse the membrane as a helical segment. At 168 to 179 (RKKIAVEAQTGM) the chain is on the cytoplasmic side. Residues 180 to 197 (LIETMWLLPVAAIYLFAI) traverse the membrane as a helical segment. The Periplasmic portion of the chain corresponds to 198 to 211 (ADSSTSHMGQNPMS). The helical transmembrane segment at 212–234 (LNLLLIAAGIVTTVPLLCFTAAA) threads the bilayer. Topologically, residues 235-238 (TRLR) are cytoplasmic. The helical transmembrane segment at 239 to 261 (LSTLGFFQYIGPTLMFLLAVTFY) threads the bilayer. The Periplasmic portion of the chain corresponds to 262–270 (GEKPGADKM). Residues 271 to 290 (VTFAFIWVALAIFVMDAIYT) form a helical membrane-spanning segment. At 291-296 (QRRTSK) the chain is on the cytoplasmic side.

This sequence belongs to the EamA transporter family.

The protein localises to the cell inner membrane. The protein is Protein RarD (rarD) of Escherichia coli (strain K12).